Consider the following 353-residue polypeptide: Elongation factor Ts (353 aa).

The segment at T80–V83 is involved in Mg(2+) ion dislocation from EF-Tu.

The protein belongs to the EF-Ts family.

The protein resides in the cytoplasm. Associates with the EF-Tu.GDP complex and induces the exchange of GDP to GTP. It remains bound to the aminoacyl-tRNA.EF-Tu.GTP complex up to the GTP hydrolysis stage on the ribosome. This Sulfurovum sp. (strain NBC37-1) protein is Elongation factor Ts.